The following is a 299-amino-acid chain: Homeobox protein Nkx-2.5 (299 aa).

A compositionally biased stretch (basic and acidic residues) spans 90–119 (KDPKDHKKDICPLQKTLEHDKREAEDPERP). The disordered stretch occupies residues 90–128 (KDPKDHKKDICPLQKTLEHDKREAEDPERPRQRKRRKPR). The segment at residues 124–183 (RRKPRVLFSQAQVYELERRFKQQKYLSAPERDHLANVLKLTSTQVKIWFQNRRYKCKRQR) is a DNA-binding region (homeobox).

Belongs to the NK-2 homeobox family. Homodimer (via the homeobox); binds DNA as homodimer. As to expression, heart and gut tissue.

It localises to the nucleus. Functionally, transcription factor required for the development of the heart and the spleen. Implicated in commitment to and/or differentiation of the myocardial lineage. May regulate the expression of genes involved in cardiogenesis and play a role in the formation of gut and the pharyngeal region. Binds to the core DNA motif of promoter. This is Homeobox protein Nkx-2.5 (nkx-2.5) from Xenopus laevis (African clawed frog).